The sequence spans 428 residues: Histidinol dehydrogenase (428 aa).

3 residues coordinate NAD(+): tyrosine 125, glutamine 186, and asparagine 209. Serine 232, glutamine 254, and histidine 257 together coordinate substrate. Zn(2+) contacts are provided by glutamine 254 and histidine 257. Catalysis depends on proton acceptor residues glutamate 322 and histidine 323. Substrate-binding residues include histidine 323, aspartate 356, glutamate 410, and histidine 415. Aspartate 356 lines the Zn(2+) pocket. Histidine 415 is a binding site for Zn(2+).

The protein belongs to the histidinol dehydrogenase family. It depends on Zn(2+) as a cofactor.

The enzyme catalyses L-histidinol + 2 NAD(+) + H2O = L-histidine + 2 NADH + 3 H(+). The protein operates within amino-acid biosynthesis; L-histidine biosynthesis; L-histidine from 5-phospho-alpha-D-ribose 1-diphosphate: step 9/9. Functionally, catalyzes the sequential NAD-dependent oxidations of L-histidinol to L-histidinaldehyde and then to L-histidine. This chain is Histidinol dehydrogenase, found in Lactiplantibacillus plantarum (strain ATCC BAA-793 / NCIMB 8826 / WCFS1) (Lactobacillus plantarum).